Consider the following 523-residue polypeptide: Glutamate--cysteine ligase, chloroplastic (523 aa).

A disulfide bridge connects residues Cys-187 and Cys-407.

It belongs to the carboxylate-amine ligase family. Glutamate--cysteine ligase type 2 subfamily. In terms of assembly, homodimer or monomer when oxidized or reduced, respectively. Post-translationally, the Cys-187-Cys-407 disulfide bridge is known to modulate the enzyme activity according to the redox status. The oxidized form constitutes the active enzyme.

It localises to the plastid. It is found in the chloroplast. The enzyme catalyses L-cysteine + L-glutamate + ATP = gamma-L-glutamyl-L-cysteine + ADP + phosphate + H(+). Its pathway is sulfur metabolism; glutathione biosynthesis; glutathione from L-cysteine and L-glutamate: step 1/2. In Solanum lycopersicum (Tomato), this protein is Glutamate--cysteine ligase, chloroplastic (GSH1).